The following is a 216-amino-acid chain: Pyridoxine/pyridoxamine 5'-phosphate oxidase (216 aa).

FMN contacts are provided by residues 63–68, 78–79, K85, and Q107; these read RMVLMK and YS. K68 is a binding site for substrate. Y125 and R129 together coordinate substrate. Residues 142 to 143 and W187 each bind FMN; that span reads QS. 193 to 195 contributes to the substrate binding site; that stretch reads RLH. R197 lines the FMN pocket.

This sequence belongs to the pyridoxamine 5'-phosphate oxidase family. In terms of assembly, homodimer. FMN serves as cofactor.

It carries out the reaction pyridoxamine 5'-phosphate + O2 + H2O = pyridoxal 5'-phosphate + H2O2 + NH4(+). The catalysed reaction is pyridoxine 5'-phosphate + O2 = pyridoxal 5'-phosphate + H2O2. It functions in the pathway cofactor metabolism; pyridoxal 5'-phosphate salvage; pyridoxal 5'-phosphate from pyridoxamine 5'-phosphate: step 1/1. The protein operates within cofactor metabolism; pyridoxal 5'-phosphate salvage; pyridoxal 5'-phosphate from pyridoxine 5'-phosphate: step 1/1. Functionally, catalyzes the oxidation of either pyridoxine 5'-phosphate (PNP) or pyridoxamine 5'-phosphate (PMP) into pyridoxal 5'-phosphate (PLP). This is Pyridoxine/pyridoxamine 5'-phosphate oxidase from Bradyrhizobium sp. (strain ORS 278).